A 105-amino-acid chain; its full sequence is U21-theraphotoxin-Cg1a 4 (105 aa).

Residues 1–21 (MKVSVLITLAVLGVMFLLTSA) form the signal peptide. Positions 22–48 (EERGSDQMDSPAWLKSMEIIFQSEERE) are excised as a propeptide. 3 cysteine pairs are disulfide-bonded: Cys49/Cys63, Cys56/Cys68, and Cys62/Cys76. Val82 is subject to Valine amide. The propeptide occupies 83–105 (GKWEMLINMNIFRIVFSYSMCTV).

Belongs to the neurotoxin 10 (Hwtx-1) family. 05 (F4a) subfamily. As to expression, expressed by the venom gland.

The protein resides in the secreted. In terms of biological role, probable ion channel inhibitor. This chain is U21-theraphotoxin-Cg1a 4, found in Chilobrachys guangxiensis (Chinese earth tiger tarantula).